Reading from the N-terminus, the 216-residue chain is Adenylate kinase (216 aa).

10–15 (GAGKGT) is an ATP binding site. The NMP stretch occupies residues 30–59 (STGDIFRANIKEKTPLGIEAKRYIDNGQLV). AMP is bound by residues T31, R36, 57 to 59 (QLV), 85 to 88 (GFPR), and Q92. Positions 126–163 (GRRVCTSCGASYHIRFNPPKIEGKCDICDNELIQRKDD) are LID. ATP is bound at residue R127. 2 residues coordinate Zn(2+): C130 and C133. 136 to 137 (SY) lines the ATP pocket. Residues C150 and C153 each contribute to the Zn(2+) site. 2 residues coordinate AMP: R160 and R171. E199 is an ATP binding site.

Belongs to the adenylate kinase family. As to quaternary structure, monomer.

It is found in the cytoplasm. It carries out the reaction AMP + ATP = 2 ADP. It functions in the pathway purine metabolism; AMP biosynthesis via salvage pathway; AMP from ADP: step 1/1. Its function is as follows. Catalyzes the reversible transfer of the terminal phosphate group between ATP and AMP. Plays an important role in cellular energy homeostasis and in adenine nucleotide metabolism. The chain is Adenylate kinase from Clostridium botulinum (strain Langeland / NCTC 10281 / Type F).